A 541-amino-acid polypeptide reads, in one-letter code: Membrane protein insertase YidC (541 aa).

Transmembrane regions (helical) follow at residues 7-27 (LLVIALLFISFLVYQQWQLDY), 346-368 (IVQNWGLAIIGVTLVVKAILYPL), 416-436 (LGGCLPILLQMPIFIALYWTF), 454-474 (LSAQDPYYILPILMGASMFLL), and 495-515 (PLIFMVFFLWFPSGLVLYWLV).

It belongs to the OXA1/ALB3/YidC family. Type 1 subfamily. As to quaternary structure, interacts with the Sec translocase complex via SecD. Specifically interacts with transmembrane segments of nascent integral membrane proteins during membrane integration.

It is found in the cell inner membrane. Its function is as follows. Required for the insertion and/or proper folding and/or complex formation of integral membrane proteins into the membrane. Involved in integration of membrane proteins that insert both dependently and independently of the Sec translocase complex, as well as at least some lipoproteins. Aids folding of multispanning membrane proteins. This Pasteurella multocida (strain Pm70) protein is Membrane protein insertase YidC.